Consider the following 1052-residue polypeptide: MSADQEPVAFLAKQPWRPKQVTEDPDEEDEEDGDEGKNGFSLEEVLRLGGTKQDYLMLATLDENEEVVDGGKKGTIDDLQQGELESFIQNLNLAKYSKSLIEEDEPEKKENASKKEAKLLKVENKKQKATEGKKTSEKKVKNKTVAEQRPESCPVSKAKKDKQPDVFEFLERQTMLLRPGGKWYDMEYSGEYSLEPQPPDVVSKYKALAQKLYEHEVSLFKSKTNNQKGGSSTWMKAIVSSGTLADRMAAMILLIQDDAVHTLQFVETLMSLVKKKGSKQQCLMALDTFKELLITDLLPDSRKLRVFSQHPFHKLEEMSSGNKDSRDRRLILWYYEHQLKHLVAEFVQVLETLSHDSLVTTKTRALVAAHELLCDKPEEEKALLVQVINKLGDPQNRIATKASHLLEVLLRKHPNMKGVVCGEIERLLFRSNISPKAQYYAICFLNQMVLSHEESELANKLITLYFCFFRTCIKKKDIESKMLSAILTGVNRAYPYSQIGDDKVREQVDTLFKVLHVVNFNTSVQALMLLFQVMNSQQTISDRYYTALYRKMLDPGLTTCSKQAMFLNLIYKSLKADIMLRRVKAFVKRLLQVTCTQMPPFICGALYLVSEILKAKPDLRSQLDDHPESDEENFVDVGDDSDDEKFTDADKGTATDAVKEVESKETEPESSAEAEKPKAASWVHFDNLKGGKQIKTYDPFSRNPLFCGAENTTLWELKKLSEHFHPSVALFAKTILEGNCIQYSGDPLQDFTLMRFLDRFVYRNPKLHKGKENTDSVVMQPKRKHFMKNVRDLAVNSKEFLAKEESQIPVDEVFFYRYYKKVAVVKDKQKRSADEESIEDIDDEEFENMIDTFEDDNCFPPGKDDIDFASNMKKTKGAKADLEDSESSDGELGDLDDDEVSLGSMNDEDFEIDEDGGTFMDVSDDESEDAPEFADANPKANTKKSKRKSEDDFDFAGSFQGQKKKKKSFNDSSLFVSAEEFGHLLDENMGSKFDTIGMNAMANRDNASFKQLKWEAERDDWLHNRDVKSIIKKKKNFRKKMKAPQKPKRQRK.

Disordered stretches follow at residues 1–40 (MSAD…KNGF), 122–158 (VENK…VSKA), and 621–677 (SQLD…AEKP). The segment covering 23 to 34 (EDPDEEDEEDGD) has biased composition (acidic residues). The span at 122 to 150 (VENKKQKATEGKKTSEKKVKNKTVAEQRP) shows a compositional bias: basic and acidic residues. The segment covering 627–643 (PESDEENFVDVGDDSDD) has biased composition (acidic residues). Phosphoserine is present on residues Ser629 and Ser641. Basic and acidic residues predominate over residues 644–677 (EKFTDADKGTATDAVKEVESKETEPESSAEAEKP). Phosphoserine is present on Ser837. The segment at 876–969 (KGAKADLEDS…QGQKKKKKSF (94 aa)) is disordered. Acidic residues predominate over residues 883–932 (EDSESSDGELGDLDDDEVSLGSMNDEDFEIDEDGGTFMDVSDDESEDAPE). A phosphoserine mark is found at Ser958, Ser972, and Ser977. Positions 1032–1052 (KKKKNFRKKMKAPQKPKRQRK) are disordered.

Belongs to the CBF/MAK21 family. In terms of tissue distribution, ubiquitous.

It localises to the nucleus. Its function is as follows. Stimulates transcription from the HSP70 promoter. This chain is CCAAT/enhancer-binding protein zeta (Cebpz), found in Mus musculus (Mouse).